A 505-amino-acid polypeptide reads, in one-letter code: Actin nucleation-promoting factor WASL (505 aa).

S2 carries the post-translational modification N-acetylserine. Residues 34–141 enclose the WH1 domain; sequence LGKKCVTMSS…KAVTDLLGRR (108 aa). 2 disordered regions span residues 138–163 and 185–205; these read LGRR…ATVD and TKEK…DIGT. Residues 186 to 198 are compositionally biased toward basic residues; sequence KEKKKGKAKKKRL. Positions 203–216 constitute a CRIB domain; sequence IGTPSNFQHIGHVG. S242 is subject to Phosphoserine; by TNK2. Y256 carries the phosphotyrosine; by FAK1 and TNK2 modification. 3 disordered regions span residues 266 to 406, 449 to 468, and 477 to 505; these read EAVK…AGSK, SVTD…SGIV, and KRSK…EWED. Pro residues-rich tracts occupy residues 276–349, 356–365, and 372–391; these read APPP…PLPA, SGPPPPPPPL, and APPP…PPGL. R307 is subject to Omega-N-methylarginine. WH2 domains lie at 405 to 422 and 433 to 450; these read SKAA…LKKV and GRDA…LKSV. 2 positions are modified to phosphoserine: S484 and S485. A compositionally biased stretch (acidic residues) spans 486–505; the sequence is DEDEDEDDDEDFEDDDEWED.

As to quaternary structure, binds actin and the Arp2/3 complex. Interacts with CDC42. Interacts with FCHSD1. Interacts with FCHSD2. Binds to SH3 domains of GRB2. Interacts with the C-terminal SH3 domain of DNMBP. Interacts with SNX9. Interacts with the WW domains of PRPF40A/FBP11. Interacts with PTK2/FAK1. Interacts with PACSIN1, PACSIN2 and PACSIN3. Interacts with NOSTRIN. Binds to TNK2. Interacts with SNX33. Interacts with NONO (via second RRM domain); the interaction is direct. Component of a multiprotein complex with NONO and SFPQ; associates with the complex via direct interaction with NONO. Post-translationally, phosphorylation at Ser-242, Tyr-256, Ser-484 and Ser-485 enhances actin polymerization activity.

Its subcellular location is the cytoplasm. The protein resides in the cytoskeleton. It is found in the nucleus. Functionally, regulates actin polymerization by stimulating the actin-nucleating activity of the Arp2/3 complex. Involved in various processes, such as mitosis and cytokinesis, via its role in the regulation of actin polymerization. Together with CDC42, involved in the extension and maintenance of the formation of thin, actin-rich surface projections called filopodia. In addition to its role in the cytoplasm, also plays a role in the nucleus by regulating gene transcription, probably by promoting nuclear actin polymerization. Binds to HSF1/HSTF1 and forms a complex on heat shock promoter elements (HSE) that negatively regulates HSP90 expression. Plays a role in dendrite spine morphogenesis. The sequence is that of Actin nucleation-promoting factor WASL (WASL) from Bos taurus (Bovine).